A 198-amino-acid polypeptide reads, in one-letter code: Carnitine operon protein CaiE (198 aa).

The disordered stretch occupies residues 179-198; sequence VEENRPRLKGTTDVKPKSAQ. Residues 180-198 show a composition bias toward basic and acidic residues; sequence EENRPRLKGTTDVKPKSAQ.

This sequence belongs to the transferase hexapeptide repeat family.

It functions in the pathway amine and polyamine metabolism; carnitine metabolism. Its function is as follows. Overproduction of CaiE stimulates the activity of CaiB and CaiD. The protein is Carnitine operon protein CaiE of Salmonella choleraesuis (strain SC-B67).